A 385-amino-acid chain; its full sequence is Iron uptake system component EfeM (385 aa).

The first 22 residues, 1 to 22, serve as a signal peptide directing secretion; sequence MNFTKIAVSAGCILALCAGCGA.

This sequence belongs to the EfeM/EfeO family. Component of the iron transporter efeUOB/M complex composed of EfeU, EfeM and EfeB; EfeU is essential for the complex formation.

The protein resides in the cell membrane. Its subcellular location is the membrane raft. Functionally, part of the iron transporter system efeUOB/M involved in iron import. Specifically binds Fe(3+), which is produced by EfeB-mediated oxidation of Fe(2+), and delivers it to the cell membrane permease EfeU. The protein is Iron uptake system component EfeM of Bacillus subtilis (strain 168).